Here is a 268-residue protein sequence, read N- to C-terminus: Ubiquinone/menaquinone biosynthesis C-methyltransferase UbiE (268 aa).

The segment at 1–23 is disordered; the sequence is MTDQHAFATEQVQLDPTLSPTTE. Residues 10–23 are compositionally biased toward polar residues; that stretch reads EQVQLDPTLSPTTE. S-adenosyl-L-methionine is bound by residues Thr-91, Asp-112, 140–141, and Ser-157; that span reads NA.

The protein belongs to the class I-like SAM-binding methyltransferase superfamily. MenG/UbiE family.

It carries out the reaction a 2-demethylmenaquinol + S-adenosyl-L-methionine = a menaquinol + S-adenosyl-L-homocysteine + H(+). The catalysed reaction is a 2-methoxy-6-(all-trans-polyprenyl)benzene-1,4-diol + S-adenosyl-L-methionine = a 5-methoxy-2-methyl-3-(all-trans-polyprenyl)benzene-1,4-diol + S-adenosyl-L-homocysteine + H(+). Its pathway is quinol/quinone metabolism; menaquinone biosynthesis; menaquinol from 1,4-dihydroxy-2-naphthoate: step 2/2. It participates in cofactor biosynthesis; ubiquinone biosynthesis. Methyltransferase required for the conversion of demethylmenaquinol (DMKH2) to menaquinol (MKH2) and the conversion of 2-polyprenyl-6-methoxy-1,4-benzoquinol (DDMQH2) to 2-polyprenyl-3-methyl-6-methoxy-1,4-benzoquinol (DMQH2). This Pasteurella multocida (strain Pm70) protein is Ubiquinone/menaquinone biosynthesis C-methyltransferase UbiE.